The sequence spans 435 residues: Glutamate-1-semialdehyde 2,1-aminomutase (435 aa).

Lys-266 carries the N6-(pyridoxal phosphate)lysine modification.

It belongs to the class-III pyridoxal-phosphate-dependent aminotransferase family. HemL subfamily. Homodimer. Pyridoxal 5'-phosphate serves as cofactor.

It localises to the cytoplasm. It carries out the reaction (S)-4-amino-5-oxopentanoate = 5-aminolevulinate. The protein operates within porphyrin-containing compound metabolism; protoporphyrin-IX biosynthesis; 5-aminolevulinate from L-glutamyl-tRNA(Glu): step 2/2. The chain is Glutamate-1-semialdehyde 2,1-aminomutase from Coxiella burnetii (strain CbuK_Q154) (Coxiella burnetii (strain Q154)).